Here is a 211-residue protein sequence, read N- to C-terminus: Thymidylate kinase (211 aa).

10–17 lines the ATP pocket; it reads GPDGAGKT.

The protein belongs to the thymidylate kinase family.

It catalyses the reaction dTMP + ATP = dTDP + ADP. Phosphorylation of dTMP to form dTDP in both de novo and salvage pathways of dTTP synthesis. The sequence is that of Thymidylate kinase (tmk) from Lactococcus lactis subsp. lactis (strain IL1403) (Streptococcus lactis).